The chain runs to 35 residues: Small toxic polypeptide LdrB (35 aa).

The helical transmembrane segment at 10-30 threads the bilayer; the sequence is FWHDLAAPILAGIITAAIVGW.

Belongs to the Ldr toxic peptide family.

Its subcellular location is the cell inner membrane. Functionally, toxic component of a type I toxin-antitoxin (TA) system. Overexpression causes rapid cell killing, probably by disrupting the cell inner membrane and disruption of ATP synthesis. This chain is Small toxic polypeptide LdrB (ldrB), found in Escherichia coli (strain K12).